Reading from the N-terminus, the 118-residue chain is Ribosome-binding factor A (118 aa).

This sequence belongs to the RbfA family. As to quaternary structure, monomer. Binds 30S ribosomal subunits, but not 50S ribosomal subunits or 70S ribosomes.

The protein localises to the cytoplasm. One of several proteins that assist in the late maturation steps of the functional core of the 30S ribosomal subunit. Associates with free 30S ribosomal subunits (but not with 30S subunits that are part of 70S ribosomes or polysomes). Required for efficient processing of 16S rRNA. May interact with the 5'-terminal helix region of 16S rRNA. The sequence is that of Ribosome-binding factor A from Dehalococcoides mccartyi (strain ATCC BAA-2100 / JCM 16839 / KCTC 5957 / BAV1).